We begin with the raw amino-acid sequence, 123 residues long: Small ribosomal subunit protein uS12 (123 aa).

The residue at position 89 (Asp89) is a 3-methylthioaspartic acid. Residues 102–123 (LDTQGVKDRKQGRSKYGAKRPK) are disordered. Positions 113 to 123 (GRSKYGAKRPK) are enriched in basic residues.

The protein belongs to the universal ribosomal protein uS12 family. Part of the 30S ribosomal subunit. Contacts proteins S8 and S17. May interact with IF1 in the 30S initiation complex.

In terms of biological role, with S4 and S5 plays an important role in translational accuracy. Its function is as follows. Interacts with and stabilizes bases of the 16S rRNA that are involved in tRNA selection in the A site and with the mRNA backbone. Located at the interface of the 30S and 50S subunits, it traverses the body of the 30S subunit contacting proteins on the other side and probably holding the rRNA structure together. The combined cluster of proteins S8, S12 and S17 appears to hold together the shoulder and platform of the 30S subunit. The protein is Small ribosomal subunit protein uS12 of Magnetococcus marinus (strain ATCC BAA-1437 / JCM 17883 / MC-1).